Reading from the N-terminus, the 563-residue chain is Heat shock 70 kDa protein 8 (563 aa).

Positions 1–25 (MAEAAYTVASDSENTGEEKSSSSPS) are disordered. A2 is subject to N-acetylalanine.

The protein belongs to the heat shock protein 70 (TC 1.A.33) family. DnaK subfamily.

Its function is as follows. In cooperation with other chaperones, Hsp70s are key components that facilitate folding of de novo synthesized proteins, assist translocation of precursor proteins into organelles, and are responsible for degradation of damaged protein under stress conditions. In Arabidopsis thaliana (Mouse-ear cress), this protein is Heat shock 70 kDa protein 8 (HSP70-8).